Here is a 400-residue protein sequence, read N- to C-terminus: CinA-like protein (400 aa).

It belongs to the CinA family.

The polypeptide is CinA-like protein (Escherichia coli (strain SE11)).